The sequence spans 176 residues: Inner membrane-spanning protein YciB (176 aa).

The next 6 membrane-spanning stretches (helical) occupy residues 3-23 (FLFD…WGIF), 24-44 (TATA…AFRH), 49-69 (TMLW…LVLH), 81-101 (LYWL…NNLI), 121-141 (VAWA…VHNF), and 149-169 (FKLF…SLWL).

It belongs to the YciB family.

It is found in the cell inner membrane. Its function is as follows. Plays a role in cell envelope biogenesis, maintenance of cell envelope integrity and membrane homeostasis. This Burkholderia vietnamiensis (strain G4 / LMG 22486) (Burkholderia cepacia (strain R1808)) protein is Inner membrane-spanning protein YciB.